Here is a 319-residue protein sequence, read N- to C-terminus: ATP-dependent 6-phosphofructokinase (319 aa).

Gly-11 provides a ligand contact to ATP. Residue 21-25 (RAVTR) participates in ADP binding. ATP-binding positions include 72-73 (RF) and 102-105 (GDGS). Asp-103 lines the Mg(2+) pocket. 125-127 (SID) is a binding site for substrate. Residue Asp-127 is the Proton acceptor of the active site. Position 154 (Arg-154) interacts with ADP. Residues Arg-162 and 169-171 (MGR) each bind substrate. ADP is bound by residues 185–187 (GAD) and 213–215 (KKH). Substrate-binding positions include Glu-222, Arg-243, and 249–252 (HMQR).

The protein belongs to the phosphofructokinase type A (PFKA) family. ATP-dependent PFK group I subfamily. Prokaryotic clade 'B1' sub-subfamily. As to quaternary structure, homotetramer. Mg(2+) serves as cofactor.

The protein resides in the cytoplasm. It carries out the reaction beta-D-fructose 6-phosphate + ATP = beta-D-fructose 1,6-bisphosphate + ADP + H(+). It participates in carbohydrate degradation; glycolysis; D-glyceraldehyde 3-phosphate and glycerone phosphate from D-glucose: step 3/4. Allosterically activated by ADP and other diphosphonucleosides, and allosterically inhibited by phosphoenolpyruvate. Catalyzes the phosphorylation of D-fructose 6-phosphate to fructose 1,6-bisphosphate by ATP, the first committing step of glycolysis. The chain is ATP-dependent 6-phosphofructokinase from Lactobacillus johnsonii (strain CNCM I-12250 / La1 / NCC 533).